The sequence spans 164 residues: Transcription factor MafF (164 aa).

Residues 51–76 form a basic motif region; the sequence is RLKQRRRTLKNRGYAASCRVKRVCQK. Residues 51–114 enclose the bZIP domain; sequence RLKQRRRTLK…DALRGKCEAL (64 aa). The segment at 79-93 is leucine-zipper; it reads LQKQKSELEREVDKL. The segment at 141-164 is disordered; it reads KSTPGSGSGPAHGPDPAHGPASCS. Positions 149 to 164 are enriched in low complexity; it reads GPAHGPDPAHGPASCS.

This sequence belongs to the bZIP family. Maf subfamily. In terms of assembly, monomer and homo- or heterodimer. Interacts with MIP. Forms high affinity heterodimers with members of the CNC-bZIP family such as NFE2L1/NRF1. In terms of tissue distribution, expressed in the term myometrium and kidney.

It is found in the nucleus. Functionally, since they lack a putative transactivation domain, the small Mafs behave as transcriptional repressors when they dimerize among themselves. However, they seem to serve as transcriptional activators by dimerizing with other (usually larger) basic-zipper proteins, such as NFE2L1/NRF1, and recruiting them to specific DNA-binding sites. Interacts with the upstream promoter region of the oxytocin receptor gene. May be a transcriptional enhancer in the up-regulation of the oxytocin receptor gene at parturition. The polypeptide is Transcription factor MafF (MAFF) (Homo sapiens (Human)).